The following is a 347-amino-acid chain: Phenylalanine--tRNA ligase alpha subunit (347 aa).

Glu261 is a binding site for Mg(2+).

Belongs to the class-II aminoacyl-tRNA synthetase family. Phe-tRNA synthetase alpha subunit type 1 subfamily. As to quaternary structure, tetramer of two alpha and two beta subunits. Requires Mg(2+) as cofactor.

Its subcellular location is the cytoplasm. It carries out the reaction tRNA(Phe) + L-phenylalanine + ATP = L-phenylalanyl-tRNA(Phe) + AMP + diphosphate + H(+). This Streptococcus pyogenes serotype M1 protein is Phenylalanine--tRNA ligase alpha subunit.